Consider the following 231-residue polypeptide: Uroporphyrinogen-III C-methyltransferase (231 aa).

Residues proline 10, 85 to 87 (GGD), 115 to 116 (TS), methionine 166, and alanine 218 contribute to the S-adenosyl-L-homocysteine site.

Belongs to the precorrin methyltransferase family. Homodimer.

The catalysed reaction is uroporphyrinogen III + 2 S-adenosyl-L-methionine = precorrin-2 + 2 S-adenosyl-L-homocysteine + H(+). The enzyme catalyses uroporphyrinogen III + S-adenosyl-L-methionine = precorrin-1 + S-adenosyl-L-homocysteine + H(+). It catalyses the reaction precorrin-1 + S-adenosyl-L-methionine = precorrin-2 + S-adenosyl-L-homocysteine. Its pathway is cofactor biosynthesis; adenosylcobalamin biosynthesis; precorrin-2 from uroporphyrinogen III: step 1/1. Its activity is regulated as follows. Does not show substrate inhibition at uroporphyrinogen III concentrations of up to 20 uM, in contrast to SUMT from Sinorhizobium (previously believed to be P.denitrificans). Catalyzes the two successive C-2 and C-7 methylation reactions involved in the conversion of uroporphyrinogen III to precorrin-2 via the intermediate formation of precorrin-1. It is a step in the biosynthesis of both cobalamin (vitamin B12) and coenzyme F430. This chain is Uroporphyrinogen-III C-methyltransferase (cobA), found in Methanobacterium ivanovii.